Consider the following 877-residue polypeptide: DNA mismatch repair protein MutS (877 aa).

ATP is bound at residue 630–637; it reads GPNMAGKS.

The protein belongs to the DNA mismatch repair MutS family.

This protein is involved in the repair of mismatches in DNA. It is possible that it carries out the mismatch recognition step. This protein has a weak ATPase activity. The protein is DNA mismatch repair protein MutS of Jannaschia sp. (strain CCS1).